The following is a 765-amino-acid chain: Probable exo-1,4-beta-xylosidase bxlB (765 aa).

The signal sequence occupies residues 1–25 (MYSSNSRRAASILACIVSLTQLGFA). N67 and N107 each carry an N-linked (GlcNAc...) asparagine glycan. The active site involves D293. Residues N345, N412, N423, N464, and N761 are each glycosylated (N-linked (GlcNAc...) asparagine).

This sequence belongs to the glycosyl hydrolase 3 family.

It is found in the secreted. It catalyses the reaction Hydrolysis of (1-&gt;4)-beta-D-xylans, to remove successive D-xylose residues from the non-reducing termini.. Its pathway is glycan degradation; xylan degradation. In terms of biological role, xylan 1,4-beta-xylosidase involved in the hydrolysis of xylan, a major structural heterogeneous polysaccharide found in plant biomass representing the second most abundant polysaccharide in the biosphere, after cellulose. This chain is Probable exo-1,4-beta-xylosidase bxlB (bxlB), found in Aspergillus terreus (strain NIH 2624 / FGSC A1156).